Reading from the N-terminus, the 277-residue chain is Co-chaperone protein DjlA (277 aa).

The Periplasmic segment spans residues 1–6; sequence MRYWGK. A helical transmembrane segment spans residues 7 to 31; the sequence is LLGLVLGVMYAPGVVGALLGLLVGH. Residues 32–277 lie on the Cytoplasmic side of the membrane; the sequence is MVDRALGAKR…DLIKREKGFK (246 aa). The region spanning 211–277 is the J domain; the sequence is DACKVLGVNS…DLIKREKGFK (67 aa).

In terms of assembly, homodimer.

It is found in the cell inner membrane. Functionally, regulatory DnaK co-chaperone. Direct interaction between DnaK and DjlA is needed for the induction of the wcaABCDE operon, involved in the synthesis of a colanic acid polysaccharide capsule, possibly through activation of the RcsB/RcsC phosphotransfer signaling pathway. The colanic acid capsule may help the bacterium survive conditions outside the host. This Yersinia pseudotuberculosis serotype I (strain IP32953) protein is Co-chaperone protein DjlA.